Reading from the N-terminus, the 101-residue chain is Putative pterin-4-alpha-carbinolamine dehydratase (101 aa).

Belongs to the pterin-4-alpha-carbinolamine dehydratase family.

It catalyses the reaction (4aS,6R)-4a-hydroxy-L-erythro-5,6,7,8-tetrahydrobiopterin = (6R)-L-erythro-6,7-dihydrobiopterin + H2O. The polypeptide is Putative pterin-4-alpha-carbinolamine dehydratase (phhB) (Ralstonia nicotianae (strain ATCC BAA-1114 / GMI1000) (Ralstonia solanacearum)).